The sequence spans 338 residues: Lipoate-protein ligase A (338 aa).

The BPL/LPL catalytic domain occupies 29 to 216 (PATQRVLFLW…AFFAHYGERV (188 aa)). ATP contacts are provided by residues R71, 76 to 79 (GAVF), and K134. Residue K134 coordinates (R)-lipoate.

Belongs to the LplA family. As to quaternary structure, monomer.

The protein localises to the cytoplasm. The enzyme catalyses L-lysyl-[lipoyl-carrier protein] + (R)-lipoate + ATP = N(6)-[(R)-lipoyl]-L-lysyl-[lipoyl-carrier protein] + AMP + diphosphate + H(+). The protein operates within protein modification; protein lipoylation via exogenous pathway; protein N(6)-(lipoyl)lysine from lipoate: step 1/2. Its pathway is protein modification; protein lipoylation via exogenous pathway; protein N(6)-(lipoyl)lysine from lipoate: step 2/2. Catalyzes both the ATP-dependent activation of exogenously supplied lipoate to lipoyl-AMP and the transfer of the activated lipoyl onto the lipoyl domains of lipoate-dependent enzymes. The polypeptide is Lipoate-protein ligase A (Salmonella typhimurium (strain LT2 / SGSC1412 / ATCC 700720)).